The sequence spans 114 residues: Small ribosomal subunit protein uS17 (114 aa).

This sequence belongs to the universal ribosomal protein uS17 family. In terms of assembly, part of the 30S ribosomal subunit.

In terms of biological role, one of the primary rRNA binding proteins, it binds specifically to the 5'-end of 16S ribosomal RNA. The sequence is that of Small ribosomal subunit protein uS17 from Sulfolobus acidocaldarius (strain ATCC 33909 / DSM 639 / JCM 8929 / NBRC 15157 / NCIMB 11770).